Here is a 104-residue protein sequence, read N- to C-terminus: MKFRPLHDRVVIRRAEGDTKSKGGIIIPDNAKEKPQEGEVIAVGPGARDENGALVPLDVKAGDLILFGKWSGTEVKIDGEDLLIMKEADIMGVIDKSVEAKKAA.

This sequence belongs to the GroES chaperonin family. Heptamer of 7 subunits arranged in a ring. Interacts with the chaperonin GroEL.

The protein resides in the cytoplasm. Functionally, together with the chaperonin GroEL, plays an essential role in assisting protein folding. The GroEL-GroES system forms a nano-cage that allows encapsulation of the non-native substrate proteins and provides a physical environment optimized to promote and accelerate protein folding. GroES binds to the apical surface of the GroEL ring, thereby capping the opening of the GroEL channel. This is Co-chaperonin GroES 1 from Mesorhizobium japonicum (strain LMG 29417 / CECT 9101 / MAFF 303099) (Mesorhizobium loti (strain MAFF 303099)).